The primary structure comprises 745 residues: Probable xyloglucan glycosyltransferase 3 (745 aa).

2 consecutive transmembrane segments (helical) span residues 116 to 136 (GFLLLSLAMLAFETVAHLKGW) and 196 to 216 (IDYIAWAIQKLSGFCIALFMV). Asp300 is a catalytic residue. Substrate contacts are provided by Asp359 and Asp361. The active site involves Asp453. The next 4 helical transmembrane spans lie at 531 to 551 (LILPFYSFTLFCVILPLTMFV), 556 to 576 (LPIWVICYVPVIMSVLNILPA), 695 to 715 (IFKKELALAFLLLTAATRSLL), and 720 to 740 (LHFYFLLFQGVTFLAVGLDLI).

It belongs to the glycosyltransferase 2 family. Plant cellulose synthase-like C subfamily.

It localises to the golgi apparatus membrane. Probable beta-1,4-glucan synthase rather involved in the synthesis of the xyloglucan backbone than cellulose. Seems to work simultaneously with xyloglucan 6-xylosyltransferase. Xyloglucan is a noncellulosic polysaccharides of plant cell wall and consists of a glucan backbone substituted by xylose, galactose and fucose. The protein is Probable xyloglucan glycosyltransferase 3 (CSLC3) of Oryza sativa subsp. japonica (Rice).